The primary structure comprises 257 residues: Acetylglutamate kinase (257 aa).

Substrate contacts are provided by residues 43 to 44, Arg65, and Asn157; that span reads GG. ATP-binding positions include 180-185 and 208-210; these read DVSGIL and IIT.

Belongs to the acetylglutamate kinase family. ArgB subfamily. Homodimer.

Its subcellular location is the cytoplasm. It catalyses the reaction N-acetyl-L-glutamate + ATP = N-acetyl-L-glutamyl 5-phosphate + ADP. It participates in amino-acid biosynthesis; L-arginine biosynthesis; N(2)-acetyl-L-ornithine from L-glutamate: step 2/4. Functionally, catalyzes the ATP-dependent phosphorylation of N-acetyl-L-glutamate. This Salmonella paratyphi B (strain ATCC BAA-1250 / SPB7) protein is Acetylglutamate kinase.